Reading from the N-terminus, the 922-residue chain is Non-centrosomal microtubule array protein 1 (922 aa).

Over residues 1–10 (MSNERVSTGS) the composition is skewed to polar residues. Disordered stretches follow at residues 1–134 (MSNE…HLPP), 250–277 (PVRL…TVPR), 465–491 (KSRH…QMNL), and 533–563 (TQKE…SNLS). Basic and acidic residues-rich tracts occupy residues 43-54 (SMERKDMPDRPK) and 70-94 (PKDR…KECA). Positions 99 to 113 (SNTSSEHSSRSNSST) are enriched in low complexity. Basic and acidic residues-rich tracts occupy residues 256–276 (RGDT…DTVP) and 468–484 (HLSE…ERRG). Residues 539 to 563 (SHSTPSQSRHSSSKSSHFNGSSNLS) show a composition bias toward low complexity. Positions 564 to 728 (TSEQLRLQEM…RSVSTLRLEQ (165 aa)) form a coiled coil.

It is found in the cytoplasm. The protein resides in the cytoskeleton. It localises to the apical cell membrane. Its subcellular location is the cell junction. The protein localises to the hemidesmosome. It is found in the adherens junction. Functionally, plays a role in the assembly of microtubule arrays in the germline acting redundantly with ptrn-1 to control circumferential microtubule assembly along the body which is necessary for larval development, viability, and morphology and integrity of the epidermis. Required for microtubule stability and anchorage by binding to microtubule minus ends. Recruited to hemidesomosomes in early embryonic elongation to direct the nucleation and growth of non-centrosomal microtubules. In terms of biological role, required for normal nuclear migration in the embryonic epidermis. Its function is as follows. Directs the assembly of non-centrosomal microtubule arrays that determine the position of nuclei within intracellular compartments in the epidermis and this is independent of ptrn-1 activity. This chain is Non-centrosomal microtubule array protein 1, found in Caenorhabditis elegans.